Here is a 665-residue protein sequence, read N- to C-terminus: GTPase IMAP family member 8 (665 aa).

The AIG1-type G 1 domain maps to 8–210 (MSELRLLLLG…HVNFKTEGSR (203 aa)). Residues 17–24 (GKCRSGKS) are G1. Residues 17–25 (GKCRSGKSA) and Ser38 contribute to the GTP site. The G2 stretch occupies residues 44-48 (TVIKM). The G3 stretch occupies residues 65–68 (DTPD). Residues 134–137 (TRKD) are G4. GTP-binding positions include 135–137 (RKD) and Asn170. The segment at 169 to 171 (NNK) is G5. Residues 217-246 (EAASQEGDKPQGPRERQLQSTGPEQNPGTS) are disordered. Residues 222–233 (EGDKPQGPRERQ) are compositionally biased toward basic and acidic residues. Polar residues predominate over residues 234–246 (LQSTGPEQNPGTS). AIG1-type G domains follow at residues 245 to 435 (TSEL…VFRE) and 436 to 644 (KETL…SKLI). Coiled-coil stretches lie at residues 400-427 (NYRA…HQNG) and 608-657 (QAQE…EKLL).

The protein belongs to the TRAFAC class TrmE-Era-EngA-EngB-Septin-like GTPase superfamily. AIG1/Toc34/Toc159-like paraseptin GTPase family. IAN subfamily. In terms of tissue distribution, expressed in the spleen, intestine, liver, and colon, as well as in lung, placenta, kidney, muscle, and heart. Extremely low expression, if any, in brain, in thymus, bone marrow, and blood leukocytes. Detected in T-cells.

Its subcellular location is the endoplasmic reticulum. It localises to the golgi apparatus. It is found in the mitochondrion. The protein resides in the cytoplasm. The protein localises to the cytosol. Its function is as follows. Exerts an anti-apoptotic effect in the immune system and is involved in responses to infections. The protein is GTPase IMAP family member 8 (GIMAP8) of Homo sapiens (Human).